The chain runs to 185 residues: Ribosome-recycling factor (185 aa).

It belongs to the RRF family.

The protein resides in the cytoplasm. In terms of biological role, responsible for the release of ribosomes from messenger RNA at the termination of protein biosynthesis. May increase the efficiency of translation by recycling ribosomes from one round of translation to another. The protein is Ribosome-recycling factor of Streptococcus pyogenes serotype M28 (strain MGAS6180).